The chain runs to 357 residues: Ribosomal RNA large subunit methyltransferase M (357 aa).

Residues Ser190, 223–226 (APGG), Asp242, Asp262, and Asp278 contribute to the S-adenosyl-L-methionine site. Residue Lys307 is the Proton acceptor of the active site.

It belongs to the class I-like SAM-binding methyltransferase superfamily. RNA methyltransferase RlmE family. RlmM subfamily. Monomer.

Its subcellular location is the cytoplasm. It carries out the reaction cytidine(2498) in 23S rRNA + S-adenosyl-L-methionine = 2'-O-methylcytidine(2498) in 23S rRNA + S-adenosyl-L-homocysteine + H(+). In terms of biological role, catalyzes the 2'-O-methylation at nucleotide C2498 in 23S rRNA. The sequence is that of Ribosomal RNA large subunit methyltransferase M from Chromohalobacter salexigens (strain ATCC BAA-138 / DSM 3043 / CIP 106854 / NCIMB 13768 / 1H11).